The following is a 469-amino-acid chain: 3-isopropylmalate dehydratase large subunit (469 aa).

Positions 347, 410, and 413 each coordinate [4Fe-4S] cluster.

It belongs to the aconitase/IPM isomerase family. LeuC type 1 subfamily. Heterodimer of LeuC and LeuD. Requires [4Fe-4S] cluster as cofactor.

The catalysed reaction is (2R,3S)-3-isopropylmalate = (2S)-2-isopropylmalate. It functions in the pathway amino-acid biosynthesis; L-leucine biosynthesis; L-leucine from 3-methyl-2-oxobutanoate: step 2/4. Functionally, catalyzes the isomerization between 2-isopropylmalate and 3-isopropylmalate, via the formation of 2-isopropylmaleate. The protein is 3-isopropylmalate dehydratase large subunit of Ralstonia nicotianae (strain ATCC BAA-1114 / GMI1000) (Ralstonia solanacearum).